The chain runs to 446 residues: Phosphoglucosamine mutase (446 aa).

Residue Ser-102 is the Phosphoserine intermediate of the active site. Mg(2+) is bound by residues Ser-102, Asp-241, Asp-243, and Asp-245. Ser-102 is subject to Phosphoserine.

This sequence belongs to the phosphohexose mutase family. Mg(2+) is required as a cofactor. In terms of processing, activated by phosphorylation.

The enzyme catalyses alpha-D-glucosamine 1-phosphate = D-glucosamine 6-phosphate. Functionally, catalyzes the conversion of glucosamine-6-phosphate to glucosamine-1-phosphate. This chain is Phosphoglucosamine mutase, found in Xylella fastidiosa (strain M23).